The primary structure comprises 132 residues: Small ribosomal subunit protein eS17B (132 aa).

S43 carries the post-translational modification Phosphoserine.

The protein belongs to the eukaryotic ribosomal protein eS17 family. Component of the small ribosomal subunit (SSU). Mature yeast ribosomes consist of a small (40S) and a large (60S) subunit. The 40S small subunit contains 1 molecule of ribosomal RNA (18S rRNA) and at least 33 different proteins. The large 60S subunit contains 3 rRNA molecules (25S, 5.8S and 5S rRNA) and at least 46 different proteins.

The protein resides in the cytoplasm. In terms of biological role, component of the ribosome, a large ribonucleoprotein complex responsible for the synthesis of proteins in the cell. The small ribosomal subunit (SSU) binds messenger RNAs (mRNAs) and translates the encoded message by selecting cognate aminoacyl-transfer RNA (tRNA) molecules. The large subunit (LSU) contains the ribosomal catalytic site termed the peptidyl transferase center (PTC), which catalyzes the formation of peptide bonds, thereby polymerizing the amino acids delivered by tRNAs into a polypeptide chain. The nascent polypeptides leave the ribosome through a tunnel in the LSU and interact with protein factors that function in enzymatic processing, targeting, and the membrane insertion of nascent chains at the exit of the ribosomal tunnel. The chain is Small ribosomal subunit protein eS17B (rps1702) from Schizosaccharomyces pombe (strain 972 / ATCC 24843) (Fission yeast).